The sequence spans 150 residues: Arginine repressor (150 aa).

This sequence belongs to the ArgR family.

It is found in the cytoplasm. It functions in the pathway amino-acid biosynthesis; L-arginine biosynthesis [regulation]. Regulates arginine biosynthesis genes. This chain is Arginine repressor, found in Clostridium botulinum (strain Loch Maree / Type A3).